A 48-amino-acid polypeptide reads, in one-letter code: MAVPDRRVSKTRAAKRRTHYSVKLAKPIKAKDGTWKLPHHINKFTKEY.

A disordered region spans residues 1-20; it reads MAVPDRRVSKTRAAKRRTHY. Over residues 9-20 the composition is skewed to basic residues; it reads SKTRAAKRRTHY.

The protein belongs to the bacterial ribosomal protein bL32 family.

In Helicobacter acinonychis (strain Sheeba), this protein is Large ribosomal subunit protein bL32.